A 459-amino-acid polypeptide reads, in one-letter code: Cysteine--tRNA ligase (459 aa).

Cys-27 serves as a coordination point for Zn(2+). The 'HIGH' region signature appears at 29–39 (VTVYDDCHIGH). Positions 208, 233, and 237 each coordinate Zn(2+). The 'KMSKS' region motif lies at 265-269 (KMSKS). Lys-268 provides a ligand contact to ATP.

This sequence belongs to the class-I aminoacyl-tRNA synthetase family. In terms of assembly, monomer. It depends on Zn(2+) as a cofactor.

It localises to the cytoplasm. The catalysed reaction is tRNA(Cys) + L-cysteine + ATP = L-cysteinyl-tRNA(Cys) + AMP + diphosphate. This chain is Cysteine--tRNA ligase, found in Francisella tularensis subsp. novicida (strain U112).